Here is a 511-residue protein sequence, read N- to C-terminus: MVPSFLSLSFSSLGLWASGLILVLGFLKLIHLLLRRQTLAKAMDKFPGPPTHWLFGHALEIQETGSLDKVVSWAHQFPYAHPLWFGQFIGFLNIYEPDYAKAVYSRGDPKAPDVYDFFLQWIGRGLLVLEGPKWLQHRKLLTPGFHYDVLKPYVAVFTESTRIMLDKWEEKAREGKSFDIFCDVGHMALNTLMKCTFGRGDTGLGHRDSSYYLAVSDLTLLMQQRLVSFQYHNDFIYWLTPHGRRFLRACQVAHDHTDQVIRERKAALQDEKVRKKIQNRRHLDFLDILLGARDEDDIKLSDADLRAEVDTFMFEGHDTTTSGISWFLYCMALYPEHQHRCREEVREILGDQDFFQWDDLGKMTYLTMCIKESFRLYPPVPQVYRQLSKPVTFVDGRSLPAGSLISMHIYALHRNSAVWPDPEVFDSLRFSTENASKRHPFAFMPFSAGPRNCIGQQFAMSEMKVVTAMCLLRFEFSLDPSRLPIKMPQLVLRSKNGFHLHLKPLGPGSGK.

Glutamate 315 is a binding site for heme. Position 436 is a phosphoserine (serine 436). Heme is bound at residue cysteine 453.

This sequence belongs to the cytochrome P450 family. Requires heme as cofactor. In terms of tissue distribution, detected in the liver and lung (at protein level).

It localises to the endoplasmic reticulum membrane. It is found in the microsome membrane. The enzyme catalyses an organic molecule + reduced [NADPH--hemoprotein reductase] + O2 = an alcohol + oxidized [NADPH--hemoprotein reductase] + H2O + H(+). Its function is as follows. Cytochromes P450 are a group of heme-thiolate monooxygenases. In liver microsomes, this enzyme is involved in an NADPH-dependent electron transport pathway. It oxidizes a variety of structurally unrelated compounds, including steroids, fatty acids, and xenobiotics. In Homo sapiens (Human), this protein is Cytochrome P450 4B1 (CYP4B1).